A 396-amino-acid chain; its full sequence is Enoyl-[acyl-carrier-protein] reductase [NADH] (396 aa).

Residues Gly48–Tyr53, Phe74–Glu75, Asp111–Ala112, and Leu139–Ala140 contribute to the NAD(+) site. Tyr225 serves as a coordination point for substrate. The active-site Proton donor is the Tyr235. NAD(+) is bound by residues Lys244 and Val273–Thr275.

It belongs to the TER reductase family. As to quaternary structure, monomer.

It carries out the reaction a 2,3-saturated acyl-[ACP] + NAD(+) = a (2E)-enoyl-[ACP] + NADH + H(+). The protein operates within lipid metabolism; fatty acid biosynthesis. In terms of biological role, involved in the final reduction of the elongation cycle of fatty acid synthesis (FAS II). Catalyzes the reduction of a carbon-carbon double bond in an enoyl moiety that is covalently linked to an acyl carrier protein (ACP). The protein is Enoyl-[acyl-carrier-protein] reductase [NADH] of Teredinibacter turnerae (strain ATCC 39867 / T7901).